Consider the following 172-residue polypeptide: RNA silencing suppressor p19 (172 aa).

The segment covering 1 to 20 (MERAIQGNDAREQANSERWD) has biased composition (basic and acidic residues). Residues 1-38 (MERAIQGNDAREQANSERWDGGSGGTTSPFKLPDESPS) are disordered.

It belongs to the tombusviruses protein p19 family. Homodimer.

Its function is as follows. Acts as a suppressor of RNA-mediated gene silencing, also known as post-transcriptional gene silencing (PTGS), a mechanism of plant viral defense that limits the accumulation of viral RNAs. Binds to short interfering RNAs (siRNAs) with high affinity. Acts as a molecular caliper to specifically select siRNAs based on the length of the duplex region of the RNA. This is RNA silencing suppressor p19 from Capsicum annuum (Capsicum pepper).